The chain runs to 88 residues: Co-chaperonin GroES (88 aa).

Belongs to the GroES chaperonin family. In terms of assembly, heptamer of 7 subunits arranged in a ring. Interacts with the chaperonin GroEL.

It is found in the cytoplasm. Together with the chaperonin GroEL, plays an essential role in assisting protein folding. The GroEL-GroES system forms a nano-cage that allows encapsulation of the non-native substrate proteins and provides a physical environment optimized to promote and accelerate protein folding. GroES binds to the apical surface of the GroEL ring, thereby capping the opening of the GroEL channel. This chain is Co-chaperonin GroES, found in Rubrobacter xylanophilus (strain DSM 9941 / JCM 11954 / NBRC 16129 / PRD-1).